The primary structure comprises 202 residues: Small ribosomal subunit protein uS4 (202 aa).

Residues 16-42 (GELPGLSRKNPRRAYPPGQHGQARKKR) form a disordered region. An S4 RNA-binding domain is found at 90 to 151 (MRLDNTVFRL…QERSRRLVEA (62 aa)).

It belongs to the universal ribosomal protein uS4 family. As to quaternary structure, part of the 30S ribosomal subunit. Contacts protein S5. The interaction surface between S4 and S5 is involved in control of translational fidelity.

In terms of biological role, one of the primary rRNA binding proteins, it binds directly to 16S rRNA where it nucleates assembly of the body of the 30S subunit. With S5 and S12 plays an important role in translational accuracy. The sequence is that of Small ribosomal subunit protein uS4 from Rippkaea orientalis (strain PCC 8801 / RF-1) (Cyanothece sp. (strain PCC 8801)).